Consider the following 251-residue polypeptide: Aliphatic sulfonates import ATP-binding protein SsuB (251 aa).

The region spanning 19–238 is the ABC transporter domain; that stretch reads GELRHVDKWY…PGEPGAHTER (220 aa). 51–58 is an ATP binding site; sequence GRSGSGKS.

The protein belongs to the ABC transporter superfamily. Aliphatic sulfonates importer (TC 3.A.1.17.2) family. In terms of assembly, the complex is composed of two ATP-binding proteins (SsuB), two transmembrane proteins (SsuC) and a solute-binding protein (SsuA).

It is found in the cell membrane. The enzyme catalyses ATP + H2O + aliphatic sulfonate-[sulfonate-binding protein]Side 1 = ADP + phosphate + aliphatic sulfonateSide 2 + [sulfonate-binding protein]Side 1.. Functionally, part of the ABC transporter complex SsuABC involved in aliphatic sulfonates import. Responsible for energy coupling to the transport system. In Mycobacterium avium (strain 104), this protein is Aliphatic sulfonates import ATP-binding protein SsuB.